The chain runs to 610 residues: UvrABC system protein C (610 aa).

Positions 16–94 (HQPGVYRMYN…IKQYLPKYNV (79 aa)) constitute a GIY-YIG domain. Residues 204-239 (NQVLELLVQKMEIASQQLKFEDAAKFRDQIQAIRRV) enclose the UVR domain.

Belongs to the UvrC family. In terms of assembly, interacts with UvrB in an incision complex.

Its subcellular location is the cytoplasm. Its function is as follows. The UvrABC repair system catalyzes the recognition and processing of DNA lesions. UvrC both incises the 5' and 3' sides of the lesion. The N-terminal half is responsible for the 3' incision and the C-terminal half is responsible for the 5' incision. This is UvrABC system protein C from Vibrio vulnificus (strain CMCP6).